The following is an 822-amino-acid chain: Structure-specific endonuclease subunit SLX4 (822 aa).

6 disordered regions span residues 1 to 39 (MSHLDLTRHRTRSPSPSQIFGSSTTPVATNSTHSEPSAS), 73 to 117 (TPAV…PRPL), 277 to 362 (GTTN…GVSD), 390 to 418 (RVSSDEDKLGVPSAPASSRQSARDRTSVS), 456 to 507 (KSHE…SGQL), and 589 to 676 (KNSA…QASS). Over residues 13 to 39 (SPSPSQIFGSSTTPVATNSTHSEPSAS) the composition is skewed to polar residues. Positions 280–294 (NSSSSEGSSNKSSGK) are enriched in low complexity. The span at 310 to 320 (VTTITSLSTAQ) shows a compositional bias: polar residues. Over residues 342 to 354 (GKRSKSQTKKGGN) the composition is skewed to basic residues. Residues 460 to 470 (SSTLTLPSTST) are compositionally biased toward low complexity. The segment covering 471–484 (NASNQGFSSQNTIN) has biased composition (polar residues). A compositionally biased stretch (low complexity) spans 490–506 (SQTTSTTTESTGVESGQ). Polar residues predominate over residues 589-612 (KNSAPTSLPANNANPPDSHASGQK). Residues 627–636 (TTKRASKAPQ) show a composition bias toward basic residues. A compositionally biased stretch (low complexity) spans 637-650 (KKQSTSSTSHSAKA).

It belongs to the SLX4 family. Forms a heterodimer with SLX1. Post-translationally, phosphorylated in response to DNA damage.

Its subcellular location is the nucleus. Functionally, regulatory subunit of the SLX1-SLX4 structure-specific endonuclease that resolves DNA secondary structures generated during DNA repair and recombination. Has endonuclease activity towards branched DNA substrates, introducing single-strand cuts in duplex DNA close to junctions with ss-DNA. This chain is Structure-specific endonuclease subunit SLX4, found in Coccidioides immitis (strain RS) (Valley fever fungus).